A 302-amino-acid polypeptide reads, in one-letter code: MILLNNSHKLLALYKSLARSIPESLKVYGSVYHINHGNPFNMEVLVDSWPEYQMVIIRPQKQEMTDDMDSYTNVYRMFSKEPQKSEEVLKNCEIVNWKQRLQIQGLQESLGEGIRVATFSKSVKVEHSRALLLVTEDILKLNASSKSKLGSWAETGHPDDEFESETPNFKYAQLDVSYSGLVNDNWKRGKNERSLHYIKRCIEDLPAACMLGPEGVPVSWVTMDPSCEVGMAYSMEKYRRTGNMARVMVRYMKYLRQKNIPFYISVLEENEDSRRFVGQFGFFEASCEWHQWTCYPQNLVPF.

It belongs to the glycine N-acyltransferase family. Expressed in liver and kidney and, at lower levels, in pancreas, testis, ovary and stomach.

The enzyme catalyses an acyl-CoA + L-glutamine = an N(2)-acyl-L-glutamine + CoA + H(+). Acyltransferase which transfers an acyl group to the N-terminus of glutamine. Can use phenylacetyl-CoA as an acyl donor. The polypeptide is Glycine N-acyltransferase-like protein 1 (Homo sapiens (Human)).